Reading from the N-terminus, the 434-residue chain is Nicotinate phosphoribosyltransferase (434 aa).

Position 242 is a phosphohistidine; by autocatalysis (His-242).

It belongs to the NAPRTase family. Transiently phosphorylated on a His residue during the reaction cycle. Phosphorylation strongly increases the affinity for substrates and increases the rate of nicotinate D-ribonucleotide production. Dephosphorylation regenerates the low-affinity form of the enzyme, leading to product release.

It catalyses the reaction nicotinate + 5-phospho-alpha-D-ribose 1-diphosphate + ATP + H2O = nicotinate beta-D-ribonucleotide + ADP + phosphate + diphosphate. The protein operates within cofactor biosynthesis; NAD(+) biosynthesis; nicotinate D-ribonucleotide from nicotinate: step 1/1. Its function is as follows. Catalyzes the synthesis of beta-nicotinate D-ribonucleotide from nicotinate and 5-phospho-D-ribose 1-phosphate at the expense of ATP. This is Nicotinate phosphoribosyltransferase from Rhizobium etli (strain CIAT 652).